A 277-amino-acid polypeptide reads, in one-letter code: General transcription factor IIF subunit 2 (277 aa).

It belongs to the TFIIF beta subunit family. Heterodimer of an alpha and a beta subunit.

The protein localises to the nucleus. TFIIF is a general transcription initiation factor that binds to RNA polymerase II and helps to recruit it to the initiation complex in collaboration with TFIIB. The sequence is that of General transcription factor IIF subunit 2 (TfIIFbeta) from Drosophila melanogaster (Fruit fly).